Here is a 117-residue protein sequence, read N- to C-terminus: Fluoride-specific ion channel FluC 2 (117 aa).

Transmembrane regions (helical) follow at residues 4-24 (FLIG…GDII), 31-51 (KFPW…GIIT), 59-79 (LSMI…TFMY), and 94-114 (LIYI…GEFI). The Na(+) site is built by glycine 69 and threonine 72.

It belongs to the fluoride channel Fluc/FEX (TC 1.A.43) family.

It localises to the cell membrane. It carries out the reaction fluoride(in) = fluoride(out). With respect to regulation, na(+) is not transported, but it plays an essential structural role and its presence is essential for fluoride channel function. Fluoride-specific ion channel. Important for reducing fluoride concentration in the cell, thus reducing its toxicity. This chain is Fluoride-specific ion channel FluC 2, found in Clostridium acetobutylicum (strain ATCC 824 / DSM 792 / JCM 1419 / IAM 19013 / LMG 5710 / NBRC 13948 / NRRL B-527 / VKM B-1787 / 2291 / W).